We begin with the raw amino-acid sequence, 344 residues long: DNA-directed RNA polymerase subunit alpha (344 aa).

The alpha N-terminal domain (alpha-NTD) stretch occupies residues 1–238; that stretch reads MKVIKTAPLI…KQLGVFGEKP (238 aa). The interval 253–344 is alpha C-terminal domain (alpha-CTD); sequence DAKDLSAKIE…EKLEDKGGND (92 aa).

It belongs to the RNA polymerase alpha chain family. As to quaternary structure, homodimer. The RNAP catalytic core consists of 2 alpha, 1 beta, 1 beta' and 1 omega subunit. When a sigma factor is associated with the core the holoenzyme is formed, which can initiate transcription.

It catalyses the reaction RNA(n) + a ribonucleoside 5'-triphosphate = RNA(n+1) + diphosphate. In terms of biological role, DNA-dependent RNA polymerase catalyzes the transcription of DNA into RNA using the four ribonucleoside triphosphates as substrates. The chain is DNA-directed RNA polymerase subunit alpha from Helicobacter acinonychis (strain Sheeba).